Reading from the N-terminus, the 400-residue chain is Coiled-coil domain-containing glutamate-rich protein 1 (400 aa).

Over residues 1-11 the composition is skewed to basic and acidic residues; that stretch reads MTQTVNEREDP. 3 disordered regions span residues 1 to 68, 134 to 164, and 203 to 353; these read MTQT…IPGP, RPPG…PPID, and QEKL…DKFL. Residues 31 to 45 are compositionally biased toward basic residues; the sequence is YHRRQRGAPMSKRRY. Over residues 46 to 57 the composition is skewed to basic and acidic residues; that stretch reads RDGPKTEYEAPR. Basic residues predominate over residues 137–157; sequence GRKKRWGRRGRGLRRHPRRSF. The segment covering 209-220 has biased composition (low complexity); it reads QQAALRAHQAQA. The segment covering 255 to 271 has biased composition (polar residues); sequence PSLTFSPAPGQQNQSPT. Over residues 275 to 347 the composition is skewed to acidic residues; it reads VEEEEKNVDD…EAGLEEGEQR (73 aa). Residues 299 to 335 are a coiled coil; it reads EEEEVDGESEDEDVDEEEVEEAGNGEEREEDQEEEDV.

It localises to the nucleus. Functionally, regulator of histone epigenetic modifications and chromatin compaction into the sperm head, required for histone-to-protamine (HTP) transition. HTP is a key event in which somatic histones are first replaced by testis-specific histone variants, then transition proteins (TNPs) are incorporated into the spermatid nucleus, and finally protamines (PRMs) replace the TNPs to promote chromatin condensation. This Rattus norvegicus (Rat) protein is Coiled-coil domain-containing glutamate-rich protein 1 (Ccer1).